The primary structure comprises 169 residues: Transcription antitermination protein NusB (169 aa).

The interval 147 to 169 is disordered; that stretch reads RGLIDQSFSRPQKPESEATEIEE.

It belongs to the NusB family.

In terms of biological role, involved in transcription antitermination. Required for transcription of ribosomal RNA (rRNA) genes. Binds specifically to the boxA antiterminator sequence of the ribosomal RNA (rrn) operons. This chain is Transcription antitermination protein NusB, found in Chlorobium chlorochromatii (strain CaD3).